The chain runs to 1761 residues: Lysine-specific demethylase 3B (1761 aa).

At A2 the chain carries N-acetylalanine. The tract at residues 253-346 (DNSAPQSEGG…QRAKQPPSTF (94 aa)) is disordered. Positions 298–309 (ASKKLKGDRGEV) are enriched in basic and acidic residues. K361 is modified (N6-acetyllysine). Disordered stretches follow at residues 370 to 394 (QDEP…QTPL) and 438 to 496 (DTGL…NGVL). Composition is skewed to polar residues over residues 380 to 392 (ASFT…TGQT), 453 to 468 (SRSQ…SILA), and 477 to 495 (PSSS…SNGV). A phosphoserine mark is found at S492, S546, S556, and S560. The tract at residues 572-603 (RSVLGTDTKPGSKAGSSVDRKVPAESMPTLTP) is disordered. T614 carries the post-translational modification Phosphothreonine. Residues 714 to 762 (GPSLSAMGNGRSSSPTSSLTQPIEMPTLSSSPTEERPTVGPGQQDNPLL) are disordered. Residues 723–745 (GRSSSPTSSLTQPIEMPTLSSSP) show a composition bias toward polar residues. S766, S773, S778, and S779 each carry phosphoserine. K788 is covalently cross-linked (Glycyl lysine isopeptide (Lys-Gly) (interchain with G-Cter in SUMO2)). At S798 the chain carries Phosphoserine. Residues 805 to 827 (ACRQDSDSSTNSDLSDLSDSEEQ) are disordered. Residues 1031-1056 (CDVCETTLFNIHWVCRKCGFGVCLDC) form a C6-type zinc finger. Residues 1142–1161 (GMSQLPSINPSASSGNETTF) are compositionally biased toward polar residues. The disordered stretch occupies residues 1142–1220 (GMSQLPSINP…PCPDTAPPSS (79 aa)). Basic and acidic residues predominate over residues 1174-1193 (EPDHVPKADSTDIRSEEPLK). Over residues 1194–1204 (TDSSASNSNSE) the composition is skewed to polar residues. Residues S1253 and S1259 each carry the phosphoserine modification. The short motif at 1293–1297 (LRDLL) is the LXXLL motif element. Positions 1498–1721 (MPTRFEDLME…HCFRLTQEFR (224 aa)) constitute a JmjC domain. The Fe cation site is built by H1560, D1562, and H1689.

Belongs to the JHDM2 histone demethylase family. Fe(2+) serves as cofactor. In terms of tissue distribution, ubiquitous. Highly expressed in placenta, skeletal muscle, kidney, heart and liver.

It is found in the nucleus. It carries out the reaction N(6),N(6)-dimethyl-L-lysyl(9)-[histone H3] + 2 2-oxoglutarate + 2 O2 = L-lysyl(9)-[histone H3] + 2 formaldehyde + 2 succinate + 2 CO2. Functionally, histone demethylase that specifically demethylates 'Lys-9' of histone H3, thereby playing a central role in histone code. Demethylation of Lys residue generates formaldehyde and succinate. May have tumor suppressor activity. In Homo sapiens (Human), this protein is Lysine-specific demethylase 3B (KDM3B).